The sequence spans 856 residues: DNA mismatch repair protein MutS (856 aa).

ATP is bound at residue 611 to 618; that stretch reads GPNMGGKS.

Belongs to the DNA mismatch repair MutS family.

This protein is involved in the repair of mismatches in DNA. It is possible that it carries out the mismatch recognition step. This protein has a weak ATPase activity. The protein is DNA mismatch repair protein MutS of Histophilus somni (strain 129Pt) (Haemophilus somnus).